The primary structure comprises 395 residues: Chalcone synthase (395 aa).

At Val2 the chain carries N-acetylvaline. The residue at position 2 (Val2) is an N-acetylalanine. Residue Cys169 is part of the active site.

The protein belongs to the thiolase-like superfamily. Chalcone/stilbene synthases family.

It carries out the reaction (E)-4-coumaroyl-CoA + 3 malonyl-CoA + 3 H(+) = 2',4,4',6'-tetrahydroxychalcone + 3 CO2 + 4 CoA. Its pathway is secondary metabolite biosynthesis; flavonoid biosynthesis. Its function is as follows. The primary product of this enzyme is 4,2',4',6'-tetrahydroxychalcone (also termed naringenin-chalcone or chalcone) which can under specific conditions spontaneously isomerize into naringenin. The polypeptide is Chalcone synthase (CHS) (Arabidopsis thaliana (Mouse-ear cress)).